We begin with the raw amino-acid sequence, 151 residues long: UPF0208 membrane protein KPN78578_26420 (151 aa).

2 helical membrane-spanning segments follow: residues 46–65 (YAIR…QIAL) and 69–91 (LGPA…WWLG).

The protein belongs to the UPF0208 family.

Its subcellular location is the cell inner membrane. In Klebsiella pneumoniae subsp. pneumoniae (strain ATCC 700721 / MGH 78578), this protein is UPF0208 membrane protein KPN78578_26420.